We begin with the raw amino-acid sequence, 122 residues long: Large ribosomal subunit protein uL14 (122 aa).

Belongs to the universal ribosomal protein uL14 family. In terms of assembly, part of the 50S ribosomal subunit. Forms a cluster with proteins L3 and L19. In the 70S ribosome, L14 and L19 interact and together make contacts with the 16S rRNA in bridges B5 and B8.

In terms of biological role, binds to 23S rRNA. Forms part of two intersubunit bridges in the 70S ribosome. This Syntrophotalea carbinolica (strain DSM 2380 / NBRC 103641 / GraBd1) (Pelobacter carbinolicus) protein is Large ribosomal subunit protein uL14.